Reading from the N-terminus, the 70-residue chain is MELLNKSISVVKNVVCNFLFEKIKIDENINIDGIDSGPGMSKRLTTSTNINVVLVLIIALIIFILMLDGV.

A helical membrane pass occupies residues 50–70 (INVVLVLIIALIIFILMLDGV).

Its subcellular location is the membrane. This is an uncharacterized protein from Dictyostelium discoideum (Social amoeba).